A 282-amino-acid chain; its full sequence is Homeobox protein pv.1 (282 aa).

2 stretches are compositionally biased toward basic and acidic residues: residues 17 to 26 (EEAADGKDSM) and 44 to 59 (YAKEMPRRKDGQDVQE). Residues 17-128 (EEAADGKDSM…HRGESPKSDL (112 aa)) are disordered. Polar residues-rich tracts occupy residues 86-96 (WGSSDDFSSVG) and 103-114 (EGSPSPMRNSQE). The segment covering 116-128 (ETDHRGESPKSDL) has biased composition (basic and acidic residues). Positions 129-188 (QRHLRTAFTPQQISKLEQAFNKQRYLGASERKKLATSLRLSEIQVKTWFQNRRMKLKRQI) form a DNA-binding region, homeobox.

In terms of tissue distribution, expressed in the ventral marginal zone of blastulae. At early gastrulation, expression begins to spread to the animal pole (ectoderm), and at stage 11.5 is expressed in a gradient across the animal cap, with levels highest in the ventral region. At the end of gastrulation, predominantly localized to the ventral and lateral regions of the closing slit blastopore. Also expressed at a low level in ventral endoderm.

It localises to the nucleus. In terms of biological role, transcriptional repressor. Acts in a ventral signaling pathway downstream of bmp4, which suppresses dorsal mesoderm formation and leads to both ventral mesoderm and ventral ectoderm formation. Acts in the ectoderm to simultaneously specify epidermal lineages and restrict neuralization. Represses transcription of dorsal-specific genes. Binds to DNA, with preference for the target sequences 5'-TAATGC-3' and 5'-TAATTG-3'. Acts in a pathway downstream of bmp4 and fgf to negatively regulate erythroid specification. The protein is Homeobox protein pv.1 of Xenopus laevis (African clawed frog).